Reading from the N-terminus, the 95-residue chain is Large ribosomal subunit protein eL30 (95 aa).

The protein belongs to the eukaryotic ribosomal protein eL30 family.

The protein is Large ribosomal subunit protein eL30 of Methanospirillum hungatei JF-1 (strain ATCC 27890 / DSM 864 / NBRC 100397 / JF-1).